Reading from the N-terminus, the 210-residue chain is Probable GTP-binding protein EngB (210 aa).

One can recognise an EngB-type G domain in the interval 25–199 (CGIEVAFAGR…RQKLDSWFSE (175 aa)). Residues 33-40 (GRSNAGKS), 60-64 (GRTQL), 78-81 (DLPG), 145-148 (TKAD), and 178-180 (FSS) contribute to the GTP site. Mg(2+) contacts are provided by Ser-40 and Thr-62.

It belongs to the TRAFAC class TrmE-Era-EngA-EngB-Septin-like GTPase superfamily. EngB GTPase family. It depends on Mg(2+) as a cofactor.

In terms of biological role, necessary for normal cell division and for the maintenance of normal septation. This is Probable GTP-binding protein EngB from Salmonella agona (strain SL483).